Consider the following 88-residue polypeptide: Small ribosomal subunit protein uS15 (88 aa).

It belongs to the universal ribosomal protein uS15 family. In terms of assembly, part of the 30S ribosomal subunit. Forms a bridge to the 50S subunit in the 70S ribosome, contacting the 23S rRNA.

Functionally, one of the primary rRNA binding proteins, it binds directly to 16S rRNA where it helps nucleate assembly of the platform of the 30S subunit by binding and bridging several RNA helices of the 16S rRNA. In terms of biological role, forms an intersubunit bridge (bridge B4) with the 23S rRNA of the 50S subunit in the ribosome. The polypeptide is Small ribosomal subunit protein uS15 (Variovorax paradoxus (strain S110)).